A 109-amino-acid polypeptide reads, in one-letter code: Large ribosomal subunit protein uL23 (109 aa).

Belongs to the universal ribosomal protein uL23 family. In terms of assembly, part of the 50S ribosomal subunit. Contacts protein L29, and trigger factor when it is bound to the ribosome.

In terms of biological role, one of the early assembly proteins it binds 23S rRNA. One of the proteins that surrounds the polypeptide exit tunnel on the outside of the ribosome. Forms the main docking site for trigger factor binding to the ribosome. This is Large ribosomal subunit protein uL23 from Aquifex pyrophilus.